The primary structure comprises 152 residues: MSDSFLPTCILCLLALSSACYIQNCPRGGKRSQPDTSRECVSCGPGNAGRCYGPSICCGAALGCLVGSPETMSCMEENHLPSPCETGGRPCGDEGRCAAPGVCCDSVSCVMDSECLEDVRSDQSEDPSRLKTVSGEILLRLLNLASRGRRDF.

A signal peptide spans 1-19; that stretch reads MSDSFLPTCILCLLALSSA. A disulfide bridge connects residues Cys-20 and Cys-25. The residue at position 28 (Gly-28) is a Glycine amide. 7 disulfide bridges follow: Cys-40–Cys-84, Cys-43–Cys-57, Cys-51–Cys-74, Cys-58–Cys-64, Cys-91–Cys-103, Cys-97–Cys-115, and Cys-104–Cys-109.

It belongs to the vasopressin/oxytocin family.

Its subcellular location is the secreted. Functionally, vasotocin is an antidiuretic hormone. The chain is Vasotocin-neurophysin VT 1 from Catostomus commersonii (White sucker).